The chain runs to 269 residues: MNLMNPEFVMPDVQSTVDTRQMPIQRVGVRAVRHPLTVRTAEGETQATVGTWNLDVHLPADQKGTHMSRFVALLEESGGPLTADAFRAMLATMLEKLEAQAGRIEVSFPYFVNKTAPVSGVRSLLDYEVTLTGDVRDGLTRVFAKVLVPVTSLCPCSKKISQYGAHNQRSHVTIDAELAADVPVEDLIRIAEEEASCELWGLLKRPDEKFVTERAYENPKFVEDLVRDVARRLDADERIVAYVLEAENFESIHNHSAYALIERDKRRRA.

It belongs to the GTP cyclohydrolase IV family.

It carries out the reaction GTP + H2O = 7,8-dihydroneopterin 3'-triphosphate + formate + H(+). Its pathway is cofactor biosynthesis; 7,8-dihydroneopterin triphosphate biosynthesis; 7,8-dihydroneopterin triphosphate from GTP: step 1/1. Functionally, converts GTP to 7,8-dihydroneopterin triphosphate. This Burkholderia thailandensis (strain ATCC 700388 / DSM 13276 / CCUG 48851 / CIP 106301 / E264) protein is GTP cyclohydrolase FolE2.